Consider the following 257-residue polypeptide: MSQIKFKNVSKVYPNGHVGLKNINLNIEKGEFAVIVGLSGAGKSTLLRSVNRLHDITSGEIFIQGKSITKAHGKALLEMRRNIGMIFQHFNLVKRSSVLRNVLSGRVGYHPTWKMVLGLFPKEDKIKAMDALERVNILDKYNQRSDELSGGQQQRISIARALCQESEIILADEPVASLDPLTTKQVMDDLRKINQELGITILINLHFVDLAKEYGTRIIGLRDGEVVYDGPASEATDDVFSKIYGRTIKEDEKLGVN.

Residues 4–248 enclose the ABC transporter domain; the sequence is IKFKNVSKVY…VFSKIYGRTI (245 aa). Residue 37 to 44 participates in ATP binding; that stretch reads GLSGAGKS.

Belongs to the ABC transporter superfamily. Phosphonates importer (TC 3.A.1.9.1) family. In terms of assembly, the complex is composed of two ATP-binding proteins (PhnC), two transmembrane proteins (PhnE) and a solute-binding protein (PhnD).

It localises to the cell membrane. The enzyme catalyses phosphonate(out) + ATP + H2O = phosphonate(in) + ADP + phosphate + H(+). Its function is as follows. Part of the ABC transporter complex PhnCDE involved in phosphonates import. Responsible for energy coupling to the transport system. The chain is Phosphonates import ATP-binding protein PhnC from Staphylococcus aureus (strain MRSA252).